Here is a 322-residue protein sequence, read N- to C-terminus: Undecaprenyl-phosphate 4-deoxy-4-formamido-L-arabinose transferase (322 aa).

The Cytoplasmic segment spans residues 1–235; it reads MFEIHPVKKV…TCLTTTPLRM (235 aa). The chain crosses the membrane as a helical span at residues 236 to 256; that stretch reads LSLLGSIIAIGGFSIAVLLVI. Over 257-269 the chain is Periplasmic; that stretch reads LRLTFGPQWAAEG. A helical transmembrane segment spans residues 270–290; sequence VFMLFAVLFTFIGAQFIGMGL. Residues 291 to 322 lie on the Cytoplasmic side of the membrane; sequence LGEYIGRIYTDVRARPRYFVQQVIRPSSKENE.

It belongs to the glycosyltransferase 2 family.

It localises to the cell inner membrane. It catalyses the reaction UDP-4-deoxy-4-formamido-beta-L-arabinose + di-trans,octa-cis-undecaprenyl phosphate = 4-deoxy-4-formamido-alpha-L-arabinopyranosyl di-trans,octa-cis-undecaprenyl phosphate + UDP. Its pathway is glycolipid biosynthesis; 4-amino-4-deoxy-alpha-L-arabinose undecaprenyl phosphate biosynthesis; 4-amino-4-deoxy-alpha-L-arabinose undecaprenyl phosphate from UDP-4-deoxy-4-formamido-beta-L-arabinose and undecaprenyl phosphate: step 1/2. It participates in bacterial outer membrane biogenesis; lipopolysaccharide biosynthesis. Functionally, catalyzes the transfer of 4-deoxy-4-formamido-L-arabinose from UDP to undecaprenyl phosphate. The modified arabinose is attached to lipid A and is required for resistance to polymyxin and cationic antimicrobial peptides. The protein is Undecaprenyl-phosphate 4-deoxy-4-formamido-L-arabinose transferase of Escherichia coli O17:K52:H18 (strain UMN026 / ExPEC).